We begin with the raw amino-acid sequence, 245 residues long: 1-(5-phosphoribosyl)-5-[(5-phosphoribosylamino)methylideneamino] imidazole-4-carboxamide isomerase (245 aa).

The active-site Proton acceptor is the Asp-7. Catalysis depends on Asp-129, which acts as the Proton donor.

This sequence belongs to the HisA/HisF family.

The protein resides in the cytoplasm. The catalysed reaction is 1-(5-phospho-beta-D-ribosyl)-5-[(5-phospho-beta-D-ribosylamino)methylideneamino]imidazole-4-carboxamide = 5-[(5-phospho-1-deoxy-D-ribulos-1-ylimino)methylamino]-1-(5-phospho-beta-D-ribosyl)imidazole-4-carboxamide. The protein operates within amino-acid biosynthesis; L-histidine biosynthesis; L-histidine from 5-phospho-alpha-D-ribose 1-diphosphate: step 4/9. The chain is 1-(5-phosphoribosyl)-5-[(5-phosphoribosylamino)methylideneamino] imidazole-4-carboxamide isomerase from Escherichia fergusonii (strain ATCC 35469 / DSM 13698 / CCUG 18766 / IAM 14443 / JCM 21226 / LMG 7866 / NBRC 102419 / NCTC 12128 / CDC 0568-73).